Reading from the N-terminus, the 234-residue chain is Adenosine 5'-phosphosulfate reductase (234 aa).

Cysteine 120, cysteine 121, cysteine 203, and cysteine 206 together coordinate [4Fe-4S] cluster. Residue cysteine 229 is the Nucleophile; cysteine thiosulfonate intermediate of the active site.

It belongs to the PAPS reductase family. CysH subfamily. Requires [4Fe-4S] cluster as cofactor.

The protein resides in the cytoplasm. The catalysed reaction is [thioredoxin]-disulfide + sulfite + AMP + 2 H(+) = adenosine 5'-phosphosulfate + [thioredoxin]-dithiol. The protein operates within sulfur metabolism; hydrogen sulfide biosynthesis; sulfite from sulfate. Its function is as follows. Catalyzes the formation of sulfite from adenosine 5'-phosphosulfate (APS) using thioredoxin as an electron donor. This chain is Adenosine 5'-phosphosulfate reductase, found in Bacillus cereus (strain ATCC 14579 / DSM 31 / CCUG 7414 / JCM 2152 / NBRC 15305 / NCIMB 9373 / NCTC 2599 / NRRL B-3711).